A 432-amino-acid chain; its full sequence is Tryptophan--tRNA ligase (432 aa).

Residues 13–15 and 21–22 contribute to the ATP site; these read TTS and GN. Residues 14–22 carry the 'HIGH' region motif; the sequence is TSGTPHLGN. Aspartate 146 lines the L-tryptophan pocket. Residues 158 to 160, leucine 198, and 205 to 209 each bind ATP; these read GRD and KMSKS. Positions 205 to 209 match the 'KMSKS' region motif; the sequence is KMSKS.

This sequence belongs to the class-I aminoacyl-tRNA synthetase family. Homodimer.

Its subcellular location is the cytoplasm. It catalyses the reaction tRNA(Trp) + L-tryptophan + ATP = L-tryptophyl-tRNA(Trp) + AMP + diphosphate + H(+). Its function is as follows. Catalyzes the attachment of tryptophan to tRNA(Trp). The protein is Tryptophan--tRNA ligase of Xanthomonas axonopodis pv. citri (strain 306).